The sequence spans 474 residues: H/ACA ribonucleoprotein complex subunit CBF5 (474 aa).

D94 serves as the catalytic Nucleophile. In terms of domain architecture, PUA spans 265-340 (YKRIVVKDSA…VVAKVKRCIM (76 aa)). Disordered stretches follow at residues 356-375 (QKKK…RANE) and 390-474 (NAEP…KSKK). Basic and acidic residues-rich tracts occupy residues 361–372 (MKADGKLDKYGR) and 400–433 (KSEE…EKKD). Tandem repeats lie at residues 431–433 (KKD), 434–436 (KKE), 437–439 (KKE), 440–442 (KKD), 443–445 (KKE), 446–448 (KKE), 449–451 (KKE), 452–454 (KKE), and 455–457 (KKR). Residues 431–460 (KKDKKEKKEKKDKKEKKEKKEKKEKKRKAD) are 9 X 3 AA tandem repeats of K-K-[DE]. A compositionally biased stretch (basic residues) spans 434–456 (KKEKKEKKDKKEKKEKKEKKEKK).

This sequence belongs to the pseudouridine synthase TruB family. As to quaternary structure, component of the small nucleolar ribonucleoprotein particles containing H/ACA-type snoRNAs (H/ACA snoRNPs).

It is found in the nucleus. The protein localises to the nucleolus. The catalysed reaction is uridine in 5S rRNA = pseudouridine in 5S rRNA. It carries out the reaction uridine in snRNA = pseudouridine in snRNA. The enzyme catalyses a uridine in mRNA = a pseudouridine in mRNA. In terms of biological role, catalytic subunit of H/ACA small nucleolar ribonucleoprotein (H/ACA snoRNP) complex, which catalyzes pseudouridylation of rRNA. This involves the isomerization of uridine such that the ribose is subsequently attached to C5, instead of the normal N1. Pseudouridine ('psi') residues may serve to stabilize the conformation of rRNAs and play a central role in ribosomal RNA processing. The H/ACA snoRNP complex also mediates pseudouridylation of other types of RNAs. Catalyzes pseudouridylation at position 93 in U2 snRNA. Also catalyzes pseudouridylation of mRNAs; H/ACA-type snoRNAs probably guide pseudouridylation of mRNAs. The polypeptide is H/ACA ribonucleoprotein complex subunit CBF5 (CBF5) (Kluyveromyces lactis (strain ATCC 8585 / CBS 2359 / DSM 70799 / NBRC 1267 / NRRL Y-1140 / WM37) (Yeast)).